The primary structure comprises 384 residues: Cobalt-precorrin-5B C(1)-methyltransferase (384 aa).

Belongs to the CbiD family.

It catalyses the reaction Co-precorrin-5B + S-adenosyl-L-methionine = Co-precorrin-6A + S-adenosyl-L-homocysteine. It participates in cofactor biosynthesis; adenosylcobalamin biosynthesis; cob(II)yrinate a,c-diamide from sirohydrochlorin (anaerobic route): step 6/10. Functionally, catalyzes the methylation of C-1 in cobalt-precorrin-5B to form cobalt-precorrin-6A. In Marinomonas sp. (strain MWYL1), this protein is Cobalt-precorrin-5B C(1)-methyltransferase.